The chain runs to 813 residues: Serine/threonine-protein kinase kin-29 (813 aa).

The Protein kinase domain occupies 18–269; sequence YDVGRAIGKG…IQNVLAHRWM (252 aa). ATP contacts are provided by residues 24 to 32 and K47; that span reads IGKGNFATV. The active-site Proton acceptor is D140. The segment at 383–412 is disordered; the sequence is LSSPDCDSDDSSNSDLCDESPLSSLEPNHK. Residues 388–400 are compositionally biased toward acidic residues; that stretch reads CDSDDSSNSDLCD.

The protein belongs to the protein kinase superfamily. CAMK Ser/Thr protein kinase family. SNF1 subfamily. In terms of assembly, interacts with tax-6. Mg(2+) serves as cofactor. Post-translationally, autophosphorylated. Elevated cAMP levels appears to act via PKA to directly or indirectly phosphorylate multiple sites on kin-29 and inhibit function.

The protein resides in the cytoplasm. It localises to the nucleus. The catalysed reaction is L-seryl-[protein] + ATP = O-phospho-L-seryl-[protein] + ADP + H(+). It carries out the reaction L-threonyl-[protein] + ATP = O-phospho-L-threonyl-[protein] + ADP + H(+). Functionally, regulates chemoreceptor expression by phosphorylating the hda-4 class II histone deacetylase (HDAC) and inhibiting the gene repression functions of hda-4 and the mef-2 transcription factor, enabling the correct sensing and transduction of food signals. Role in determining body size, the dauer decision and serotonin-mediated egg laying. May modulate the Sma/Mab pathway and regulates development in the later larval stages. The sequence is that of Serine/threonine-protein kinase kin-29 from Caenorhabditis briggsae.